Here is a 202-residue protein sequence, read N- to C-terminus: Pycsar effector protein PtPycTM (202 aa).

3 helical membrane-spanning segments follow: residues G60 to I80, L85 to A105, and I181 to G201.

Its subcellular location is the cell membrane. Functionally, pycsar (pyrimidine cyclase system for antiphage resistance) provides immunity against bacteriophage. The pyrimidine cyclase (PycC) synthesizes cyclic nucleotides in response to infection; these serve as specific second messenger signals. The signals activate the adjacent effector, leading to bacterial cell death and abortive phage infection. A clade D Pycsar system. In terms of biological role, the effector gene of a two-gene Pycsar system. Expression of this and adjacent uridylate cyclase PtPycC (AC A0A4V2JTK3) probably confers resistance to bacteriophage. The genes are probably only expressed in response to bacteriophage infection. Probably only responds to cUMP (produced by its cognate NTP cyclase), acts by impairing membrane integrity. This chain is Pycsar effector protein PtPycTM, found in Propioniciclava tarda.